A 302-amino-acid chain; its full sequence is Bifunctional protein FolD 2 (302 aa).

Residues 170-172 (GRS), Ser195, and Ile236 contribute to the NADP(+) site.

Belongs to the tetrahydrofolate dehydrogenase/cyclohydrolase family. Homodimer.

It catalyses the reaction (6R)-5,10-methylene-5,6,7,8-tetrahydrofolate + NADP(+) = (6R)-5,10-methenyltetrahydrofolate + NADPH. It carries out the reaction (6R)-5,10-methenyltetrahydrofolate + H2O = (6R)-10-formyltetrahydrofolate + H(+). It participates in one-carbon metabolism; tetrahydrofolate interconversion. Functionally, catalyzes the oxidation of 5,10-methylenetetrahydrofolate to 5,10-methenyltetrahydrofolate and then the hydrolysis of 5,10-methenyltetrahydrofolate to 10-formyltetrahydrofolate. The polypeptide is Bifunctional protein FolD 2 (Paracoccus denitrificans (strain Pd 1222)).